Reading from the N-terminus, the 797-residue chain is Probable DNA polymerase (797 aa).

It belongs to the DNA polymerase type-B family.

It localises to the mitochondrion. The enzyme catalyses DNA(n) + a 2'-deoxyribonucleoside 5'-triphosphate = DNA(n+1) + diphosphate. In Agaricus bitorquis (Pavement mushroom), this protein is Probable DNA polymerase.